A 491-amino-acid chain; its full sequence is Trehalose-6-phosphate synthase (491 aa).

D-glucose 6-phosphate is bound at residue Arg-22. Gly-42–Gly-43 serves as a coordination point for UDP-alpha-D-glucose. The D-glucose 6-phosphate site is built by Tyr-100 and Asp-154. Residues Arg-296 and Lys-301 each coordinate UDP-alpha-D-glucose. Residue Arg-334 participates in D-glucose 6-phosphate binding. Leu-399 to Glu-403 contacts UDP-alpha-D-glucose.

This sequence belongs to the glycosyltransferase 20 family. In terms of assembly, homotetramer.

It carries out the reaction ADP-alpha-D-glucose + D-glucose 6-phosphate = alpha,alpha-trehalose 6-phosphate + ADP + H(+). It catalyses the reaction CDP-alpha-D-glucose + D-glucose 6-phosphate = alpha,alpha-trehalose 6-phosphate + CDP + H(+). The enzyme catalyses GDP-alpha-D-glucose + D-glucose 6-phosphate = alpha,alpha-trehalose 6-phosphate + GDP + H(+). The catalysed reaction is TDP-alpha-D-glucose + D-glucose 6-phosphate = 5-methyl-UDP + alpha,alpha-trehalose 6-phosphate + H(+). It carries out the reaction D-glucose 6-phosphate + UDP-alpha-D-glucose = alpha,alpha-trehalose 6-phosphate + UDP + H(+). It functions in the pathway glycan biosynthesis; trehalose biosynthesis. Functionally, probably involved in the osmoprotection via the biosynthesis of trehalose and in the production of glycogen and alpha-glucan via the TreS-Pep2 branch involved in the biosynthesis of maltose-1-phosphate (M1P). Catalyzes the transfer of glucose from UDP-glucose (UDP-Glc) to D-glucose 6-phosphate (Glc-6-P) to form trehalose-6-phosphate. Probably also able to use ADP-Glc, CDP-Glc, GDP-Glc and TDP-Glc as glucosyl donors. This chain is Trehalose-6-phosphate synthase, found in Mycolicibacterium vanbaalenii (strain DSM 7251 / JCM 13017 / BCRC 16820 / KCTC 9966 / NRRL B-24157 / PYR-1) (Mycobacterium vanbaalenii).